Consider the following 328-residue polypeptide: Malate dehydrogenase (328 aa).

NAD(+) is bound at residue 12–18 (GAAGQIA). 2 residues coordinate substrate: arginine 93 and arginine 99. NAD(+) contacts are provided by residues asparagine 106, glutamine 113, and 130–132 (VGN). Residues asparagine 132 and arginine 163 each coordinate substrate. The active-site Proton acceptor is histidine 188.

The protein belongs to the LDH/MDH superfamily. MDH type 2 family.

It carries out the reaction (S)-malate + NAD(+) = oxaloacetate + NADH + H(+). Its function is as follows. Catalyzes the reversible oxidation of malate to oxaloacetate. This is Malate dehydrogenase from Burkholderia multivorans (strain ATCC 17616 / 249).